Reading from the N-terminus, the 364-residue chain is DNA replication and repair protein RecF (364 aa).

33–40 (GENGSGKT) is an ATP binding site.

This sequence belongs to the RecF family.

It localises to the cytoplasm. Functionally, the RecF protein is involved in DNA metabolism; it is required for DNA replication and normal SOS inducibility. RecF binds preferentially to single-stranded, linear DNA. It also seems to bind ATP. This is DNA replication and repair protein RecF from Rickettsia felis (strain ATCC VR-1525 / URRWXCal2) (Rickettsia azadi).